A 700-amino-acid chain; its full sequence is Polyphosphate kinase (700 aa).

N45 provides a ligand contact to ATP. Mg(2+) contacts are provided by R373 and R403. Positions 428 to 462 (PGMKIHAKLLLITRREEQGFVRYAHIGTGNFHERT) constitute a PLD phosphodiesterase 1 domain. H433 serves as the catalytic Phosphohistidine intermediate. 3 residues coordinate ATP: Y466, R562, and H590. Positions 585–615 (DRFLEHPRVLVVHNDGDPQVFISSADWMERN) constitute a PLD phosphodiesterase 2 domain.

It belongs to the polyphosphate kinase 1 (PPK1) family. It depends on Mg(2+) as a cofactor. Post-translationally, an intermediate of this reaction is the autophosphorylated ppk in which a phosphate is covalently linked to a histidine residue through a N-P bond.

The enzyme catalyses [phosphate](n) + ATP = [phosphate](n+1) + ADP. Functionally, catalyzes the reversible transfer of the terminal phosphate of ATP to form a long-chain polyphosphate (polyP). The protein is Polyphosphate kinase of Vibrio vulnificus (strain CMCP6).